Reading from the N-terminus, the 704-residue chain is UvrABC system protein B (704 aa).

Residues 35–188 (ERINNGEKDV…DDLLRKFVSM (154 aa)) form the Helicase ATP-binding domain. 48–55 (GATGTGKS) lines the ATP pocket. Positions 101-124 (YYDYYQPEAYVAQTDTFIEKDSSI) match the Beta-hairpin motif. One can recognise a Helicase C-terminal domain in the interval 438–604 (QIDDLLGEIR…PLRKKIADIT (167 aa)). A UVR domain is found at 659-694 (VGMIAQLTEQMHGAAAELQFEVAARIRDEVSELKKE).

The protein belongs to the UvrB family. As to quaternary structure, forms a heterotetramer with UvrA during the search for lesions. Interacts with UvrC in an incision complex.

It is found in the cytoplasm. In terms of biological role, the UvrABC repair system catalyzes the recognition and processing of DNA lesions. A damage recognition complex composed of 2 UvrA and 2 UvrB subunits scans DNA for abnormalities. Upon binding of the UvrA(2)B(2) complex to a putative damaged site, the DNA wraps around one UvrB monomer. DNA wrap is dependent on ATP binding by UvrB and probably causes local melting of the DNA helix, facilitating insertion of UvrB beta-hairpin between the DNA strands. Then UvrB probes one DNA strand for the presence of a lesion. If a lesion is found the UvrA subunits dissociate and the UvrB-DNA preincision complex is formed. This complex is subsequently bound by UvrC and the second UvrB is released. If no lesion is found, the DNA wraps around the other UvrB subunit that will check the other stand for damage. The protein is UvrABC system protein B of Pseudarthrobacter chlorophenolicus (strain ATCC 700700 / DSM 12829 / CIP 107037 / JCM 12360 / KCTC 9906 / NCIMB 13794 / A6) (Arthrobacter chlorophenolicus).